Consider the following 469-residue polypeptide: 3-isopropylmalate dehydratase large subunit (469 aa).

The [4Fe-4S] cluster site is built by Cys350, Cys410, and Cys413.

The protein belongs to the aconitase/IPM isomerase family. LeuC type 1 subfamily. As to quaternary structure, heterodimer of LeuC and LeuD. It depends on [4Fe-4S] cluster as a cofactor.

It carries out the reaction (2R,3S)-3-isopropylmalate = (2S)-2-isopropylmalate. The protein operates within amino-acid biosynthesis; L-leucine biosynthesis; L-leucine from 3-methyl-2-oxobutanoate: step 2/4. In terms of biological role, catalyzes the isomerization between 2-isopropylmalate and 3-isopropylmalate, via the formation of 2-isopropylmaleate. This chain is 3-isopropylmalate dehydratase large subunit, found in Rhizobium leguminosarum bv. trifolii (strain WSM2304).